A 512-amino-acid chain; its full sequence is Lysine--tRNA ligase (512 aa).

Residues E408 and E415 each coordinate Mg(2+).

Belongs to the class-II aminoacyl-tRNA synthetase family. In terms of assembly, homodimer. Mg(2+) serves as cofactor.

The protein localises to the cytoplasm. It carries out the reaction tRNA(Lys) + L-lysine + ATP = L-lysyl-tRNA(Lys) + AMP + diphosphate. The protein is Lysine--tRNA ligase of Prochlorococcus marinus (strain MIT 9515).